We begin with the raw amino-acid sequence, 638 residues long: Phosphomethylpyrimidine synthase (638 aa).

Residues asparagine 236, methionine 265, tyrosine 294, histidine 330, 350-352 (SRG), 391-394 (DGLR), and glutamate 430 each bind substrate. Residue histidine 434 participates in Zn(2+) binding. Tyrosine 457 lines the substrate pocket. Histidine 498 is a binding site for Zn(2+). [4Fe-4S] cluster-binding residues include cysteine 578, cysteine 581, and cysteine 586. The segment covering 608–624 (AEGASQQEAEQGMQEMS) has biased composition (low complexity). The tract at residues 608–633 (AEGASQQEAEQGMQEMSQKYKDAGRR) is disordered.

It belongs to the ThiC family. As to quaternary structure, homodimer. [4Fe-4S] cluster is required as a cofactor.

The catalysed reaction is 5-amino-1-(5-phospho-beta-D-ribosyl)imidazole + S-adenosyl-L-methionine = 4-amino-2-methyl-5-(phosphooxymethyl)pyrimidine + CO + 5'-deoxyadenosine + formate + L-methionine + 3 H(+). It participates in cofactor biosynthesis; thiamine diphosphate biosynthesis. Its function is as follows. Catalyzes the synthesis of the hydroxymethylpyrimidine phosphate (HMP-P) moiety of thiamine from aminoimidazole ribotide (AIR) in a radical S-adenosyl-L-methionine (SAM)-dependent reaction. This is Phosphomethylpyrimidine synthase from Hahella chejuensis (strain KCTC 2396).